The following is a 494-amino-acid chain: Alpha-amylase-related protein (494 aa).

The first 20 residues, 1–20 (MFKFASAVILCLVAASSTQA), serve as a signal peptide directing secretion. Gln21 carries the post-translational modification Pyrrolidone carboxylic acid. Cys48 and Cys104 are oxidised to a cystine. Residues Asn118, Gln169, and Asp178 each coordinate Ca(2+). A disulfide bridge links Cys157 with Cys171. Arg206 lines the chloride pocket. Asp208 serves as the catalytic Nucleophile. His212 is a Ca(2+) binding site. The Proton donor role is filled by Glu245. Chloride contacts are provided by Asn308 and Arg343. 3 disulfides stabilise this stretch: Cys376–Cys382, Cys418–Cys441, and Cys448–Cys460.

Belongs to the glycosyl hydrolase 13 family. Monomer. The cofactor is Ca(2+). Chloride serves as cofactor.

The protein resides in the secreted. It catalyses the reaction Endohydrolysis of (1-&gt;4)-alpha-D-glucosidic linkages in polysaccharides containing three or more (1-&gt;4)-alpha-linked D-glucose units.. The chain is Alpha-amylase-related protein (Amyrel) from Drosophila ercepeae (Fruit fly).